Consider the following 328-residue polypeptide: Alanine racemase (328 aa).

Lysine 33 (proton acceptor; specific for D-alanine) is an active-site residue. Lysine 33 bears the N6-(pyridoxal phosphate)lysine mark. A substrate-binding site is contributed by arginine 118. Tyrosine 237 functions as the Proton acceptor; specific for L-alanine in the catalytic mechanism. Residue methionine 283 coordinates substrate.

Belongs to the alanine racemase family. The cofactor is pyridoxal 5'-phosphate.

The enzyme catalyses L-alanine = D-alanine. Its pathway is amino-acid biosynthesis; D-alanine biosynthesis; D-alanine from L-alanine: step 1/1. Catalyzes the interconversion of L-alanine and D-alanine. May also act on other amino acids. The sequence is that of Alanine racemase (alr) from Campylobacter jejuni (strain RM1221).